Reading from the N-terminus, the 396-residue chain is S-adenosylmethionine synthase (396 aa).

Histidine 16 contributes to the ATP binding site. Aspartate 18 serves as a coordination point for Mg(2+). Glutamate 44 serves as a coordination point for K(+). L-methionine is bound by residues glutamate 57 and glutamine 100. The tract at residues 100–110 (QSVDIAQGVDR) is flexible loop. ATP contacts are provided by residues 165–167 (DAK), aspartate 240, 246–247 (RK), alanine 263, and lysine 267. Position 240 (aspartate 240) interacts with L-methionine. Lysine 271 provides a ligand contact to L-methionine.

The protein belongs to the AdoMet synthase family. As to quaternary structure, homotetramer; dimer of dimers. Mg(2+) is required as a cofactor. Requires K(+) as cofactor.

Its subcellular location is the cytoplasm. It catalyses the reaction L-methionine + ATP + H2O = S-adenosyl-L-methionine + phosphate + diphosphate. It functions in the pathway amino-acid biosynthesis; S-adenosyl-L-methionine biosynthesis; S-adenosyl-L-methionine from L-methionine: step 1/1. Catalyzes the formation of S-adenosylmethionine (AdoMet) from methionine and ATP. The overall synthetic reaction is composed of two sequential steps, AdoMet formation and the subsequent tripolyphosphate hydrolysis which occurs prior to release of AdoMet from the enzyme. The chain is S-adenosylmethionine synthase from Pseudomonas syringae pv. tomato (strain ATCC BAA-871 / DC3000).